Consider the following 573-residue polypeptide: 60 kDa heat shock protein, mitochondrial (573 aa).

Residues 1 to 26 constitute a mitochondrion transit peptide; sequence MLRLPTVLRQMRPVSRALAPHLTRAY. An N6-succinyllysine modification is found at Lys-31. Phosphoserine occurs at positions 67 and 70. ATP is bound at residue Lys-75. An N6-acetyllysine modification is found at Lys-75. Lys-82 is modified (N6-acetyllysine; alternate). At Lys-82 the chain carries N6-succinyllysine; alternate. Lys-87 bears the N6-acetyllysine mark. Position 90 is a phosphotyrosine (Tyr-90). The residue at position 91 (Lys-91) is an N6-acetyllysine. Residue 111–115 coordinates ATP; the sequence is DGTTT. Lys-125 carries the post-translational modification N6-acetyllysine; alternate. Lys-125 carries the post-translational modification N6-succinyllysine; alternate. Lys-130 bears the N6-acetyllysine mark. Lys-133 carries the post-translational modification N6-acetyllysine; alternate. An N6-succinyllysine; alternate modification is found at Lys-133. Lys-133 is modified (N6-malonyllysine; alternate). The residue at position 156 (Lys-156) is an N6-acetyllysine. Residues Lys-191, Lys-202, Lys-205, Lys-218, and Lys-236 each carry the N6-acetyllysine; alternate modification. N6-succinyllysine; alternate occurs at positions 191, 202, 205, 218, and 236. Lys-249 carries the N6-acetyllysine modification. Lys-250 carries the post-translational modification N6-acetyllysine; alternate. Lys-250 is modified (N6-succinyllysine; alternate). 2 positions are modified to N6-acetyllysine: Lys-269 and Lys-292. Lys-301 is subject to N6-succinyllysine. Residue Lys-314 is modified to N6-acetyllysine. Lys-352 carries the post-translational modification N6-acetyllysine; alternate. Lys-352 is modified (N6-succinyllysine; alternate). N6-acetyllysine occurs at positions 359 and 389. Lys-396 carries the N6-acetyllysine; alternate modification. Lys-396 carries the post-translational modification N6-succinyllysine; alternate. Ser-410 is modified (phosphoserine). Gly-440 contributes to the ATP binding site. Lys-455 is modified (N6-acetyllysine; alternate). The residue at position 455 (Lys-455) is an N6-succinyllysine; alternate. Lys-469 carries the post-translational modification N6-acetyllysine. An N6-acetyllysine; alternate modification is found at Lys-481. Lys-481 is subject to N6-succinyllysine; alternate. Residue Ser-488 is modified to Phosphoserine. An ATP-binding site is contributed by Asp-520. Residue Lys-551 forms a Glycyl lysine isopeptide (Lys-Gly) (interchain with G-Cter in SUMO2) linkage.

The protein belongs to the chaperonin (HSP60) family. As to quaternary structure, homoheptamer arranged in a ring structure. The functional units of these chaperonins consist of heptameric rings of the large subunit Hsp60, which function as a back-to-back double ring. Interacts with 2 heptameric Hsp10 rings to form the symmetrical football complex. Interacts with HRAS. Interacts with ATAD3A. Interacts with ETFBKMT and EEF1AKMT3. Interacts with MFHAS1.

Its subcellular location is the mitochondrion matrix. The catalysed reaction is ATP + H2O + a folded polypeptide = ADP + phosphate + an unfolded polypeptide.. Chaperonin implicated in mitochondrial protein import and macromolecular assembly. Together with Hsp10, facilitates the correct folding of imported proteins. May also prevent misfolding and promote the refolding and proper assembly of unfolded polypeptides generated under stress conditions in the mitochondrial matrix. The functional units of these chaperonins consist of heptameric rings of the large subunit Hsp60, which function as a back-to-back double ring. In a cyclic reaction, Hsp60 ring complexes bind one unfolded substrate protein per ring, followed by the binding of ATP and association with 2 heptameric rings of the co-chaperonin Hsp10. This leads to sequestration of the substrate protein in the inner cavity of Hsp60 where, for a certain period of time, it can fold undisturbed by other cell components. Synchronous hydrolysis of ATP in all Hsp60 subunits results in the dissociation of the chaperonin rings and the release of ADP and the folded substrate protein. This chain is 60 kDa heat shock protein, mitochondrial (HSPD1), found in Cricetulus griseus (Chinese hamster).